The primary structure comprises 794 residues: Ribonucleoside-diphosphate reductase large subunit (794 aa).

The 92-residue stretch at 1–92 (MHVIKRDGGQ…VSNLHKETKK (92 aa)) folds into the ATP-cone domain. ATP contacts are provided by residues 5–6 (KR), 11–17 (EGVMFDK), Thr53, and Asp57. GDP-binding residues include Ser202 and Ser217. A disulfide bridge connects residues Cys218 and Cys444. DTTP is bound by residues 226-228 (DSI), Lys243, Arg256, and 263-264 (AG). Asn427 serves as a coordination point for GDP. Asn427 serves as the catalytic Proton acceptor. The Cysteine radical intermediate role is filled by Cys429. Residues Glu431 and 604 to 607 (TAST) each bind GDP. The active-site Proton acceptor is Glu431.

Belongs to the ribonucleoside diphosphate reductase large chain family. Heterodimer of a large and a small subunit.

Its subcellular location is the cytoplasm. It carries out the reaction a 2'-deoxyribonucleoside 5'-diphosphate + [thioredoxin]-disulfide + H2O = a ribonucleoside 5'-diphosphate + [thioredoxin]-dithiol. Its activity is regulated as follows. Under complex allosteric control mediated by deoxynucleoside triphosphates and ATP binding to separate specificity and activation sites on the M1 subunit. The type of nucleotide bound at the specificity site determines substrate preference. It seems probable that ATP makes the enzyme reduce CDP and UDP, dGTP favors ADP reduction and dTTP favors GDP reduction. Stimulated by ATP and inhibited by dATP binding to the activity site. Provides the precursors necessary for DNA synthesis. Catalyzes the biosynthesis of deoxyribonucleotides from the corresponding ribonucleotides. This chain is Ribonucleoside-diphosphate reductase large subunit (rrm1), found in Danio rerio (Zebrafish).